The following is a 194-amino-acid chain: Fibroblast growth factor 7 (194 aa).

Positions 1–31 are cleaved as a signal peptide; that stretch reads MHKWILTWILPTLLYRSCFHIICLVGTISLA. Asn45 is a glycosylation site (N-linked (GlcNAc...) asparagine).

Belongs to the heparin-binding growth factors family. In terms of assembly, interacts with FGFBP1. Interacts with FGFR2. Affinity between fibroblast growth factors (FGFs) and their receptors is increased by heparan sulfate glycosaminoglycans that function as coreceptors. In terms of tissue distribution, epithelial cell.

The protein resides in the secreted. Its function is as follows. Plays an important role in the regulation of embryonic development, cell proliferation and cell differentiation. Required for normal branching morphogenesis. Growth factor active on keratinocytes. Possible major paracrine effector of normal epithelial cell proliferation. This is Fibroblast growth factor 7 (FGF7) from Homo sapiens (Human).